The primary structure comprises 255 residues: tRNA (guanine-N(1)-)-methyltransferase (255 aa).

Residues G113 and 133–138 (IGDYVL) contribute to the S-adenosyl-L-methionine site.

This sequence belongs to the RNA methyltransferase TrmD family. Homodimer.

The protein resides in the cytoplasm. It catalyses the reaction guanosine(37) in tRNA + S-adenosyl-L-methionine = N(1)-methylguanosine(37) in tRNA + S-adenosyl-L-homocysteine + H(+). Its function is as follows. Specifically methylates guanosine-37 in various tRNAs. This chain is tRNA (guanine-N(1)-)-methyltransferase, found in Salmonella paratyphi A (strain ATCC 9150 / SARB42).